Reading from the N-terminus, the 462-residue chain is Trigger factor (462 aa).

The 86-residue stretch at 163-248 (GDEVLFDFKG…LKEVRRVNSL (86 aa)) folds into the PPIase FKBP-type domain. A disordered region spans residues 442–462 (SMQEKQTQEPAEEKVETKEEK). Residues 452 to 462 (AEEKVETKEEK) are compositionally biased toward basic and acidic residues.

It belongs to the FKBP-type PPIase family. Tig subfamily.

Its subcellular location is the cytoplasm. The catalysed reaction is [protein]-peptidylproline (omega=180) = [protein]-peptidylproline (omega=0). Involved in protein export. Acts as a chaperone by maintaining the newly synthesized protein in an open conformation. Functions as a peptidyl-prolyl cis-trans isomerase. The sequence is that of Trigger factor from Mycoplasmopsis synoviae (strain 53) (Mycoplasma synoviae).